Reading from the N-terminus, the 400-residue chain is Cytochrome b (400 aa).

The helical transmembrane segment at 47–67 (LGSIAGIALVIQIITGVILAM) threads the bilayer. Residues histidine 97 and histidine 111 each contribute to the heme b site. The next 8 helical transmembrane spans lie at 98–118 (AVGA…GLYY), 131–151 (IGII…VLPW), 166–186 (FSAI…GFSV), 194–214 (FFSL…LHLV), 247–267 (FVGF…EPNY), 306–326 (LGGV…PWLD), 341–361 (IAFW…GQPA), and 368–388 (ISRF…PLIG). 2 residues coordinate heme b: histidine 198 and histidine 212.

It belongs to the cytochrome b family. In terms of assembly, the main subunits of complex b-c1 are: cytochrome b, cytochrome c1 and the Rieske protein. Heme b serves as cofactor.

Its subcellular location is the cell membrane. Component of the ubiquinol-cytochrome c reductase complex (complex III or cytochrome b-c1 complex), which is a respiratory chain that generates an electrochemical potential coupled to ATP synthesis. In Rickettsia bellii (strain RML369-C), this protein is Cytochrome b (petB).